Reading from the N-terminus, the 388-residue chain is Chorismate synthase (388 aa).

Arg39 and Arg45 together coordinate NADP(+). FMN contacts are provided by residues 130-132 (RSS), 251-252 (NA), Gly296, 311-315 (KPIPT), and Arg337.

It belongs to the chorismate synthase family. In terms of assembly, homotetramer. FMNH2 is required as a cofactor.

The catalysed reaction is 5-O-(1-carboxyvinyl)-3-phosphoshikimate = chorismate + phosphate. It functions in the pathway metabolic intermediate biosynthesis; chorismate biosynthesis; chorismate from D-erythrose 4-phosphate and phosphoenolpyruvate: step 7/7. Functionally, catalyzes the anti-1,4-elimination of the C-3 phosphate and the C-6 proR hydrogen from 5-enolpyruvylshikimate-3-phosphate (EPSP) to yield chorismate, which is the branch point compound that serves as the starting substrate for the three terminal pathways of aromatic amino acid biosynthesis. This reaction introduces a second double bond into the aromatic ring system. The protein is Chorismate synthase of Streptococcus agalactiae serotype V (strain ATCC BAA-611 / 2603 V/R).